Reading from the N-terminus, the 126-residue chain is uncharacterized protein (126 aa).

This is an uncharacterized protein from Acanthamoeba polyphaga mimivirus (APMV).